A 291-amino-acid polypeptide reads, in one-letter code: Kidney mitochondrial carrier protein 1 (291 aa).

An N-acetylserine modification is found at S2. Solcar repeat units lie at residues 7–96 (KPFV…LKRL), 104–189 (ETLL…TKKH), and 198–289 (DTVS…LKKL). Helical transmembrane passes span 9–26 (FVYGGLASITAECGTFPI), 71–89 (GIAPAMLRQASYGTIKIGT), 106–124 (LLINVVCGILSGVISSAIA), 164–183 (GVSLTAQRAAIVVGVELPVY), 204–224 (FLSSFTCGLVGALASNPVDVV), and 264–283 (GFWPNWLRLGPWNIIFFLTY).

This sequence belongs to the mitochondrial carrier (TC 2.A.29) family. As to quaternary structure, interacts with VDAC1.

The protein resides in the mitochondrion inner membrane. It carries out the reaction sulfite(in) + sulfate(out) = sulfite(out) + sulfate(in). The catalysed reaction is thiosulfate(in) + sulfate(out) = thiosulfate(out) + sulfate(in). The enzyme catalyses sulfate(out) + phosphate(in) = sulfate(in) + phosphate(out). It catalyses the reaction oxalate(in) + sulfate(out) = oxalate(out) + sulfate(in). It carries out the reaction malonate(in) + sulfate(out) = malonate(out) + sulfate(in). The catalysed reaction is maleate(in) + sulfate(out) = maleate(out) + sulfate(in). The enzyme catalyses (S)-malate(in) + sulfate(out) = (S)-malate(out) + sulfate(in). It catalyses the reaction (3S)-citramalate(in) + sulfate(out) = (3S)-citramalate(out) + sulfate(in). It carries out the reaction (3R)-citramalate(in) + sulfate(out) = (3R)-citramalate(out) + sulfate(in). The catalysed reaction is sulfate(out) + succinate(in) = sulfate(in) + succinate(out). The enzyme catalyses (S,S)-tartrate(in) + sulfate(out) = (S,S)-tartrate(out) + sulfate(in). It catalyses the reaction (2R,3R)-tartrate(in) + sulfate(out) = (2R,3R)-tartrate(out) + sulfate(in). It carries out the reaction D-aspartate(in) + sulfate(out) = D-aspartate(out) + sulfate(in). The catalysed reaction is L-aspartate(in) + sulfate(out) = L-aspartate(out) + sulfate(in). The enzyme catalyses sulfate(in) = sulfate(out). It catalyses the reaction phosphate(in) = phosphate(out). It carries out the reaction (S)-malate(out) = (S)-malate(in). In terms of biological role, antiporter that transports inorganic anions (sulfate, sulfite, thiosulfate and phosphate) and, to a lesser extent, a variety of dicarboxylates (e.g. malonate, malate and citramalate) and, even more so, aspartate. The sulfate/sulfate exchange is much higher than the phosphate/phosphate and malate/malate exchanges. The transport affinities is higher for sulfate and thiosulfate than for any other substrate. May catalyze the export of sulfite and thiosulfate (the hydrogen sulfide degradation products) from the mitochondria, thereby modulating the level of the hydrogen sulfide. Also may mediate a very low unidirectional transport of sulfate, phosphate and (S)-malate. The chain is Kidney mitochondrial carrier protein 1 from Rattus norvegicus (Rat).